We begin with the raw amino-acid sequence, 409 residues long: Putative competence-damage inducible protein (409 aa).

It belongs to the CinA family.

In Clostridium tetani (strain Massachusetts / E88), this protein is Putative competence-damage inducible protein.